Consider the following 1179-residue polypeptide: Integrin alpha-7 (1179 aa).

The first 33 residues, 1-33 (MARIPRCDFLRPPGIYYLITSLLAGLFLPPAIA), serve as a signal peptide directing secretion. The Extracellular segment spans residues 34–1076 (FNLDVMGAIR…YLDPMAVVVE (1043 aa)). FG-GAP repeat units follow at residues 38–103 (VMGA…ETDC), 110–175 (RGAN…IRDE), 185–238 (EGRP…SPDL), 292–349 (DRLT…ATRL), 350–411 (IPEV…HWAD), 412–467 (ISPL…GVVV), and 471–530 (QVLE…IDPR). Asn86 carries an N-linked (GlcNAc...) asparagine glycan. 3 disulfide bridges follow: Cys94–Cys103, Cys140–Cys163, and Cys184–Cys197. Positions 372, 374, 376, 380, 434, 436, 438, 442, 492, 494, 496, 498, and 500 each coordinate Ca(2+). Disulfide bonds link Cys539–Cys546, Cys552–Cys615, Cys681–Cys687, Cys781–Cys792, Cys939–Cys993, and Cys999–Cys1004. A glycan (N-linked (GlcNAc...) asparagine) is linked at Asn784. Basic and acidic residues predominate over residues 952–961 (SRDRRRRELG). The interval 952–978 (SRDRRRRELGQPEPQEPPEKVEPSTSW) is disordered. An N-linked (GlcNAc...) asparagine glycan is attached at Asn988. 2 N-linked (GlcNAc...) asparagine glycosylation sites follow: Asn1023 and Asn1043. Residues 1077 to 1102 (GVPWWVILLGVLAGLLVLALLVLLLW) form a helical membrane-spanning segment. Residues 1103–1179 (KLGFFKRAKH…PDGHPVPATA (77 aa)) lie on the Cytoplasmic side of the membrane. A GFFKR motif motif is present at residues 1105 to 1109 (GFFKR). Residues 1134–1153 (KEEKTGTIQRSNWGNSQWEG) form a disordered region. Residues 1139–1152 (GTIQRSNWGNSQWE) are compositionally biased toward polar residues. 3 tandem repeats follow at residues 1155–1158 (DAHP), 1163–1166 (DWHP), and 1171–1174 (DGHP). Residues 1155–1174 (DAHPILAADWHPELGPDGHP) form a 3 X 4 AA repeats of D-X-H-P region.

Belongs to the integrin alpha chain family. In terms of assembly, heterodimer of an alpha and a beta subunit. The alpha subunit is composed of a heavy and a light chain linked by a disulfide bond. Alpha-7 associates with beta-1. Interacts with COMP. Interacts (via C-terminus intracellular tail region) with CIB1; the interaction is stabilized/increased in a calcium- and magnesium-dependent manner. In terms of processing, ADP-ribosylated on at least two sites of the extracellular domain in skeletal myotubes (in vitro). Post-translationally, no proteolytic cleavage to produce the 70 kDa form is seen due to the presence of a Gly instead of an arginine residue at position 647. As to expression, isoforms containing segment X2 are found in adult heart, lung and skeletal muscle. Isoforms containing segment X1 are expressed in adult heart, lung and in proliferating skeletal myoblasts but not in adult skeletal muscle. Isoforms containing segment a are exclusively found in skeletal muscle. Isoforms containing segment B are widely expressed. In muscle fibers isoforms containing segment A and B are expressed at myotendinous and neuromuscular junctions; isoforms containing segment C are expressed at neuromuscular junctions and at extrasynaptic sites.

The protein resides in the membrane. In terms of biological role, integrin alpha-7/beta-1 is the primary laminin receptor on skeletal myoblasts and adult myofibers. During myogenic differentiation, it may induce changes in the shape and mobility of myoblasts, and facilitate their localization at laminin-rich sites of secondary fiber formation. Involved in the maintenance of the myofibers cytoarchitecture as well as for their anchorage, viability and functional integrity. Mice carrying a ITGA7 null allele are viable and fertile, but show progressive muscular dystrophy starting soon after birth, but with a distinct variability in different muscle types. Required to promote contractile phenotype acquisition in differentiated airway smooth muscle (ASM) cells. Acts as a Schwann cell receptor for laminin-2. Acts as a receptor of COMP and mediates its effect on vascular smooth muscle cells (VSMCs) maturation. The chain is Integrin alpha-7 (Itga7) from Mus musculus (Mouse).